The sequence spans 104 residues: MIRKAFVMQVNPDAHEEYQRRHSPIWPELEAVLKQHGAHHYAIWLDAQRHLLFATVEIESEARWNAVAQTEVCQRWWKHMREIMPSNPDNSPVSQELKNVFYLE.

Residue Tyr18 participates in substrate binding. The active-site Proton donor is the His22. Residues Tyr41 and 76–77 (WW) each bind substrate.

The protein belongs to the rhamnose mutarotase family. Homodimer.

Its subcellular location is the cytoplasm. It carries out the reaction alpha-L-rhamnose = beta-L-rhamnose. It participates in carbohydrate metabolism; L-rhamnose metabolism. Involved in the anomeric conversion of L-rhamnose. The protein is L-rhamnose mutarotase of Cronobacter sakazakii (strain ATCC BAA-894) (Enterobacter sakazakii).